A 335-amino-acid polypeptide reads, in one-letter code: MIEADRIISSNAQLGDEYIDRAIRPKLLTDYVGQPQVREQMGIFIQAAKLRQDALDHLLIFGPPGLGKTTLANIVANEMGVNIRTTSGPVLEKAGDLAAMLTNLEPHDVLFIDEIHRLSPAIEEVLYPAMEDYQLDIMIGEGPAARSIKLDLPPFTLIGATTRAGSLTSPLRDRFGIVQRLEFYSVEDLTSIVARSAGCLNLEMSDGASHEIARRSRGTPRIANRLLRRVRDFADVKNAGIISEDIAKSALSMLDIDQAGFDYLDRKLLSAVIERFDGGPVGLDNLAAAIGEERDTIEDVLEPYLIQQGFLQRTPRGRIATSRTYRHFGLDKLTE.

The interval 4-184 (ADRIISSNAQ…FGIVQRLEFY (181 aa)) is large ATPase domain (RuvB-L). Residues Ile23, Arg24, Gly65, Lys68, Thr69, Thr70, 131–133 (EDY), Arg174, Tyr184, and Arg221 contribute to the ATP site. Thr69 is a binding site for Mg(2+). A small ATPAse domain (RuvB-S) region spans residues 185–255 (SVEDLTSIVA…IAKSALSMLD (71 aa)). Residues 258–335 (QAGFDYLDRK…RHFGLDKLTE (78 aa)) form a head domain (RuvB-H) region. 3 residues coordinate DNA: Arg294, Arg313, and Arg318.

It belongs to the RuvB family. In terms of assembly, homohexamer. Forms an RuvA(8)-RuvB(12)-Holliday junction (HJ) complex. HJ DNA is sandwiched between 2 RuvA tetramers; dsDNA enters through RuvA and exits via RuvB. An RuvB hexamer assembles on each DNA strand where it exits the tetramer. Each RuvB hexamer is contacted by two RuvA subunits (via domain III) on 2 adjacent RuvB subunits; this complex drives branch migration. In the full resolvosome a probable DNA-RuvA(4)-RuvB(12)-RuvC(2) complex forms which resolves the HJ.

The protein localises to the cytoplasm. It carries out the reaction ATP + H2O = ADP + phosphate + H(+). Functionally, the RuvA-RuvB-RuvC complex processes Holliday junction (HJ) DNA during genetic recombination and DNA repair, while the RuvA-RuvB complex plays an important role in the rescue of blocked DNA replication forks via replication fork reversal (RFR). RuvA specifically binds to HJ cruciform DNA, conferring on it an open structure. The RuvB hexamer acts as an ATP-dependent pump, pulling dsDNA into and through the RuvAB complex. RuvB forms 2 homohexamers on either side of HJ DNA bound by 1 or 2 RuvA tetramers; 4 subunits per hexamer contact DNA at a time. Coordinated motions by a converter formed by DNA-disengaged RuvB subunits stimulates ATP hydrolysis and nucleotide exchange. Immobilization of the converter enables RuvB to convert the ATP-contained energy into a lever motion, pulling 2 nucleotides of DNA out of the RuvA tetramer per ATP hydrolyzed, thus driving DNA branch migration. The RuvB motors rotate together with the DNA substrate, which together with the progressing nucleotide cycle form the mechanistic basis for DNA recombination by continuous HJ branch migration. Branch migration allows RuvC to scan DNA until it finds its consensus sequence, where it cleaves and resolves cruciform DNA. The protein is Holliday junction branch migration complex subunit RuvB of Mannheimia succiniciproducens (strain KCTC 0769BP / MBEL55E).